Consider the following 396-residue polypeptide: Elongation factor Tu (396 aa).

Residues 10–206 (KPHVNIGTIG…AVDESVPDPV (197 aa)) enclose the tr-type G domain. Residues 19-26 (GHVDHGKT) form a G1 region. 19-26 (GHVDHGKT) contributes to the GTP binding site. Thr-26 serves as a coordination point for Mg(2+). A G2 region spans residues 62–66 (GITIN). Residues 83-86 (DAPG) are G3. Residues 83 to 87 (DAPGH) and 138 to 141 (NKSD) each bind GTP. The interval 138–141 (NKSD) is G4. Positions 176-178 (SGL) are G5.

The protein belongs to the TRAFAC class translation factor GTPase superfamily. Classic translation factor GTPase family. EF-Tu/EF-1A subfamily. In terms of assembly, monomer.

The protein resides in the cytoplasm. The catalysed reaction is GTP + H2O = GDP + phosphate + H(+). Functionally, GTP hydrolase that promotes the GTP-dependent binding of aminoacyl-tRNA to the A-site of ribosomes during protein biosynthesis. The chain is Elongation factor Tu from Paenarthrobacter aurescens (strain TC1).